A 340-amino-acid chain; its full sequence is Methionine import ATP-binding protein MetN (340 aa).

An ABC transporter domain is found at 2 to 241; sequence IRIENLTKIY…PQSSVAKEFI (240 aa). 38 to 45 is a binding site for ATP; sequence GLSGAGKS.

Belongs to the ABC transporter superfamily. Methionine importer (TC 3.A.1.24) family. The complex is composed of two ATP-binding proteins (MetN), two transmembrane proteins (MetI) and a solute-binding protein (MetQ).

Its subcellular location is the cell membrane. The catalysed reaction is L-methionine(out) + ATP + H2O = L-methionine(in) + ADP + phosphate + H(+). It carries out the reaction D-methionine(out) + ATP + H2O = D-methionine(in) + ADP + phosphate + H(+). In terms of biological role, part of the ABC transporter complex MetNIQ involved in methionine import. Responsible for energy coupling to the transport system. The chain is Methionine import ATP-binding protein MetN from Desulfitobacterium hafniense (strain Y51).